Here is an 896-residue protein sequence, read N- to C-terminus: Pentatricopeptide repeat-containing protein At5g03800 (896 aa).

PPR repeat units lie at residues 113 to 143 (KTRL…LSSP), 144 to 178 (TVVS…GLVQ), 180 to 214 (NEYT…GFLN), 215 to 247 (SVFV…IPQR), 248 to 278 (DVAS…MNRV), 284 to 318 (DSFT…GLMQ), 319 to 349 (ELSV…MMAQ), 350 to 380 (DAVT…VTEK), 381 to 415 (NTIT…GVEL), 416 to 450 (TDFS…GTAF), 451 to 481 (NPCI…WPSN), 484 to 519 (SSKA…KLFL), 520 to 554 (DEVS…GYFS), 555 to 585 (DISL…MREH), 586 to 620 (DVIS…EIKP), 621 to 653 (DIIT…MKTI), and 659 to 689 (TTEH…MPVQ). The interval 694–769 (VLRALLDSCR…HPAKSWIIHE (76 aa)) is type E motif. A type E(+) motif region spans residues 770–800 (NKIHSFHARDTSHPQEKDIYRGLEILIMECL). The type DYW motif stretch occupies residues 801–896 (KVGYEPNTEY…NGKCSCRDLW (96 aa)).

The protein belongs to the PPR family. PCMP-H subfamily.

May play a role in embryogenesis. The protein is Pentatricopeptide repeat-containing protein At5g03800 (EMB175) of Arabidopsis thaliana (Mouse-ear cress).